The chain runs to 122 residues: MARIAGVDLPRDKRIEVSLTYIFGIGRSSSRKILTDAGINPDTRVKDLTEEEVSKLREIIEKEYHVEGDLRRQVNMDIKRLMDLGCYRGIRHRRGLPVRGQNTKTNARTRKGPKRTAGGKKK.

The disordered stretch occupies residues arginine 93–lysine 122. The segment covering alanine 107 to lysine 122 has biased composition (basic residues).

The protein belongs to the universal ribosomal protein uS13 family. In terms of assembly, part of the 30S ribosomal subunit. Forms a loose heterodimer with protein S19. Forms two bridges to the 50S subunit in the 70S ribosome.

In terms of biological role, located at the top of the head of the 30S subunit, it contacts several helices of the 16S rRNA. In the 70S ribosome it contacts the 23S rRNA (bridge B1a) and protein L5 of the 50S subunit (bridge B1b), connecting the 2 subunits; these bridges are implicated in subunit movement. Contacts the tRNAs in the A and P-sites. The chain is Small ribosomal subunit protein uS13 from Syntrophomonas wolfei subsp. wolfei (strain DSM 2245B / Goettingen).